Reading from the N-terminus, the 556-residue chain is Sphingomyelinase C (556 aa).

A signal peptide spans 1 to 27 (MRIKKYTKVRLLVNCCLLLFFLIDCGA).

Its subcellular location is the secreted. It catalyses the reaction a sphingomyelin + H2O = phosphocholine + an N-acylsphing-4-enine + H(+). The protein is Sphingomyelinase C (sph) of Leptospira interrogans.